The sequence spans 332 residues: Glycerol-3-phosphate dehydrogenase [NAD(P)+] (332 aa).

Positions 11, 30, and 108 each coordinate NADPH. Sn-glycerol 3-phosphate-binding residues include Lys108, Gly137, and Ser139. Ala141 lines the NADPH pocket. Sn-glycerol 3-phosphate is bound by residues Lys192, Asp245, Ser255, Arg256, and Asn257. Catalysis depends on Lys192, which acts as the Proton acceptor. Arg256 contacts NADPH. NADPH-binding residues include Val280 and Glu282.

Belongs to the NAD-dependent glycerol-3-phosphate dehydrogenase family.

It localises to the cytoplasm. The enzyme catalyses sn-glycerol 3-phosphate + NAD(+) = dihydroxyacetone phosphate + NADH + H(+). The catalysed reaction is sn-glycerol 3-phosphate + NADP(+) = dihydroxyacetone phosphate + NADPH + H(+). It functions in the pathway membrane lipid metabolism; glycerophospholipid metabolism. Its function is as follows. Catalyzes the reduction of the glycolytic intermediate dihydroxyacetone phosphate (DHAP) to sn-glycerol 3-phosphate (G3P), the key precursor for phospholipid synthesis. The sequence is that of Glycerol-3-phosphate dehydrogenase [NAD(P)+] from Burkholderia orbicola (strain AU 1054).